The sequence spans 339 residues: Phosphate acyltransferase (339 aa).

Belongs to the PlsX family. In terms of assembly, homodimer. Probably interacts with PlsY.

The protein localises to the cytoplasm. It carries out the reaction a fatty acyl-[ACP] + phosphate = an acyl phosphate + holo-[ACP]. It functions in the pathway lipid metabolism; phospholipid metabolism. Catalyzes the reversible formation of acyl-phosphate (acyl-PO(4)) from acyl-[acyl-carrier-protein] (acyl-ACP). This enzyme utilizes acyl-ACP as fatty acyl donor, but not acyl-CoA. This chain is Phosphate acyltransferase, found in Pasteurella multocida (strain Pm70).